The following is a 1051-amino-acid chain: Exportin-T (1051 aa).

Belongs to the exportin family.

Its subcellular location is the nucleus. It localises to the cytoplasm. Its function is as follows. tRNA nucleus export receptor which facilitates tRNA translocation across the nuclear pore complex. Involved in pre-tRNA splicing, probably by affecting the interaction of pre-tRNA with splicing endonuclease. This chain is Exportin-T (LOS1), found in Eremothecium gossypii (strain ATCC 10895 / CBS 109.51 / FGSC 9923 / NRRL Y-1056) (Yeast).